The sequence spans 265 residues: Energy-coupling factor transporter ATP-binding protein EcfA1 (265 aa).

One can recognise an ABC transporter domain in the interval 2–236 (IKIKNLVFRY…KEIVELAKID (235 aa)). 36 to 43 (GHNGSGKS) is a binding site for ATP.

It belongs to the ABC transporter superfamily. Energy-coupling factor EcfA family. Forms a stable energy-coupling factor (ECF) transporter complex composed of 2 membrane-embedded substrate-binding proteins (S component), 2 ATP-binding proteins (A component) and 2 transmembrane proteins (T component).

The protein resides in the cell membrane. Its function is as follows. ATP-binding (A) component of a common energy-coupling factor (ECF) ABC-transporter complex. Unlike classic ABC transporters this ECF transporter provides the energy necessary to transport a number of different substrates. This is Energy-coupling factor transporter ATP-binding protein EcfA1 from Mycoplasmopsis pulmonis (strain UAB CTIP) (Mycoplasma pulmonis).